A 238-amino-acid chain; its full sequence is MIEILHEYWKPLLWTDGYRFTGVAITLWLLILSVVIGGVLALFLAIGRVSSNKYIQFPIWLFTYIFRGTPLYVQLLVFYSGMYTLEIVKGTEFLNAFFRSGLNCTVLALTLNTCAYTTEIFAGAIRSVPHGEIEAARAYGFSTFKMYRCIILPSALRIALPAYSNEVILMLHSTALAFTATVPDLLKIARDINAATYQPFTAFGIAAVLYLIISYVLISLFRRAEKRWLQHVKPSSTH.

Topologically, residues 1 to 26 (MIEILHEYWKPLLWTDGYRFTGVAIT) are periplasmic. In terms of domain architecture, ABC transmembrane type-1 spans 23-221 (VAITLWLLIL…IISYVLISLF (199 aa)). Residues 27–47 (LWLLILSVVIGGVLALFLAIG) form a helical membrane-spanning segment. The Cytoplasmic segment spans residues 48 to 58 (RVSSNKYIQFP). A helical membrane pass occupies residues 59–79 (IWLFTYIFRGTPLYVQLLVFY). Over 80-104 (SGMYTLEIVKGTEFLNAFFRSGLNC) the chain is Periplasmic. Residues 105 to 125 (TVLALTLNTCAYTTEIFAGAI) form a helical membrane-spanning segment. The Cytoplasmic portion of the chain corresponds to 126–157 (RSVPHGEIEAARAYGFSTFKMYRCIILPSALR). Residues 158–178 (IALPAYSNEVILMLHSTALAF) form a helical membrane-spanning segment. Topologically, residues 179-199 (TATVPDLLKIARDINAATYQP) are periplasmic. Residues 200–220 (FTAFGIAAVLYLIISYVLISL) traverse the membrane as a helical segment. Residues 221–238 (FRRAEKRWLQHVKPSSTH) lie on the Cytoplasmic side of the membrane.

Belongs to the binding-protein-dependent transport system permease family. HisMQ subfamily. In terms of assembly, the HisPMQJ complex is composed of two ATP-binding proteins (HisP), two transmembrane proteins (HisM and HisQ) and a solute-binding protein (HisJ). The HisPMQ-ArgT complex is composed of two ATP-binding proteins (HisP), two transmembrane proteins (HisM and HisQ) and a solute-binding protein (ArgT).

The protein resides in the cell inner membrane. Its function is as follows. Part of the ABC transporter complex HisPMQJ involved in histidine transport. Is also part of the ABC transporter complex HisPMQ-ArgT involved in lysine/arginine/ornithine transport. Probably responsible for the translocation of the substrate across the membrane. The chain is Histidine/lysine/arginine/ornithine transport system permease protein HisM (hisM) from Escherichia coli O157:H7.